We begin with the raw amino-acid sequence, 995 residues long: Polynucleotide 5'-hydroxyl-kinase NOL9 (995 aa).

Disordered stretches follow at residues 18 to 173 and 271 to 359; these read EQRE…SSMK and IKVF…YEPP. Low complexity-rich tracts occupy residues 75 to 94 and 110 to 129; these read TAGA…SSPS and VNKS…KSAK. Over residues 279-354 the composition is skewed to acidic residues; it reads EETDSDEDDI…DIFDTDDLDS (76 aa). ATP is bound at residue 639–646; it reads GGKGVGKS.

Belongs to the Clp1 family. NOL9/GRC3 subfamily.

Its subcellular location is the nucleus. The protein resides in the nucleolus. Functionally, polynucleotide 5'-kinase involved in rRNA processing. This Drosophila melanogaster (Fruit fly) protein is Polynucleotide 5'-hydroxyl-kinase NOL9.